The chain runs to 333 residues: Glycogenin-1 (333 aa).

At threonine 2 the chain carries N-acetylthreonine. UDP-binding residues include leucine 9, threonine 11, asparagine 12, and tyrosine 15. UDP-alpha-D-glucose-binding residues include leucine 9, threonine 11, asparagine 12, and tyrosine 15. Serine 44 is modified (phosphoserine; by PKA; in vitro). Residue arginine 77 coordinates UDP. UDP-alpha-D-glucose is bound by residues arginine 77, lysine 86, aspartate 102, alanine 103, aspartate 104, asparagine 133, serine 134, aspartate 160, aspartate 163, and glutamine 164. Residues aspartate 102, alanine 103, and aspartate 104 each coordinate UDP. Mn(2+) is bound at residue aspartate 102. Aspartate 104 lines the Mn(2+) pocket. Tyrosine 195 carries O-linked (Glc...) tyrosine glycosylation. Histidine 212, glycine 215, and lysine 218 together coordinate UDP. Residue histidine 212 coordinates Mn(2+). UDP-alpha-D-glucose-binding residues include glycine 215 and lysine 218. Residues 284-316 (SHLSLGETPATTQPFVSSEERKERWEQGQADYM) are interaction with GYS1.

The protein belongs to the glycosyltransferase 8 family. Glycogenin subfamily. Part of the GYS1-GYG1 complex, a heterooctamer composed of a tetramer of GYS1 and 2 dimers of GYG1, where each GYS1 protomer binds to one GYG1 subunit (via GYG1 C-terminus); the GYS1 tetramer may dissociate from GYG1 dimers to continue glycogen polymerization on its own. May also form a heterooctamer complex with GYS2 (via GYG1 C-terminus). Requires Mn(2+) as cofactor. In terms of processing, self-glycosylated by the transfer of glucose residues from UDP-glucose to itself, forming an alpha-1,4-glycan of around 10 residues attached to Tyr-195. Post-translationally, phosphorylated. As to expression, detected in heart, skeletal muscle, brain and testis, and at lower levels in kidney.

It is found in the cytoplasm. The protein localises to the nucleus. It catalyses the reaction L-tyrosyl-[glycogenin] + UDP-alpha-D-glucose = alpha-D-glucosyl-L-tyrosyl-[glycogenin] + UDP + H(+). The catalysed reaction is [1,4-alpha-D-glucosyl](n)-L-tyrosyl-[glycogenin] + UDP-alpha-D-glucose = [1,4-alpha-D-glucosyl](n+1)-L-tyrosyl-[glycogenin] + UDP + H(+). It participates in glycan biosynthesis; glycogen biosynthesis. Its function is as follows. Glycogenin participates in the glycogen biosynthetic process along with glycogen synthase and glycogen branching enzyme. It catalyzes the formation of a short alpha (1,4)-glucosyl chain covalently attached via a glucose 1-O-tyrosyl linkage to internal tyrosine residues and these chains act as primers for the elongation reaction catalyzed by glycogen synthase. The chain is Glycogenin-1 (GYG1) from Oryctolagus cuniculus (Rabbit).